The primary structure comprises 207 residues: MLSTFVQGFFLSAAMILPLGPQNAFVMQQGSRRQFHLMSATLCAISDGFLIGVGVFGGSALLSQSTLLLQFVTWGGVAFLFWYGWGALRVVLFANVELAQVNNSVKNRWRVVAIIFAVTWLNPHVYLDTIVVLGSIGGQLSSDLRPWFTFGAASASVSWFFSLSLLAAWFSPVLSKPLSQRIINGFICIIMWYIAWQLAKQGLLISD.

The next 6 helical transmembrane spans lie at M1–P21, L42–L62, L67–A87, V111–V131, F150–F170, and G185–I205.

It belongs to the LysE/ArgO transporter (TC 2.A.75) family.

It localises to the cell inner membrane. The enzyme catalyses L-arginine(in) = L-arginine(out). Functionally, involved in the export of arginine. Important to control the intracellular level of arginine and the correct balance between arginine and lysine. This chain is Arginine exporter protein ArgO, found in Photorhabdus laumondii subsp. laumondii (strain DSM 15139 / CIP 105565 / TT01) (Photorhabdus luminescens subsp. laumondii).